Consider the following 361-residue polypeptide: UDP-N-acetylglucosamine--N-acetylmuramyl-(pentapeptide) pyrophosphoryl-undecaprenol N-acetylglucosamine transferase (361 aa).

UDP-N-acetyl-alpha-D-glucosamine contacts are provided by residues 13–15 (TGG), Asn125, Arg167, Ser196, Ile251, 270–275 (ALTVTE), and Gln296.

This sequence belongs to the glycosyltransferase 28 family. MurG subfamily.

It is found in the cell inner membrane. The catalysed reaction is di-trans,octa-cis-undecaprenyl diphospho-N-acetyl-alpha-D-muramoyl-L-alanyl-D-glutamyl-meso-2,6-diaminopimeloyl-D-alanyl-D-alanine + UDP-N-acetyl-alpha-D-glucosamine = di-trans,octa-cis-undecaprenyl diphospho-[N-acetyl-alpha-D-glucosaminyl-(1-&gt;4)]-N-acetyl-alpha-D-muramoyl-L-alanyl-D-glutamyl-meso-2,6-diaminopimeloyl-D-alanyl-D-alanine + UDP + H(+). The protein operates within cell wall biogenesis; peptidoglycan biosynthesis. Functionally, cell wall formation. Catalyzes the transfer of a GlcNAc subunit on undecaprenyl-pyrophosphoryl-MurNAc-pentapeptide (lipid intermediate I) to form undecaprenyl-pyrophosphoryl-MurNAc-(pentapeptide)GlcNAc (lipid intermediate II). The chain is UDP-N-acetylglucosamine--N-acetylmuramyl-(pentapeptide) pyrophosphoryl-undecaprenol N-acetylglucosamine transferase from Psychrobacter arcticus (strain DSM 17307 / VKM B-2377 / 273-4).